Consider the following 492-residue polypeptide: Beta-Ala-His dipeptidase (492 aa).

Residue histidine 107 participates in Zn(2+) binding. Aspartate 109 is a catalytic residue. Aspartate 140 contacts Zn(2+). Glutamate 174 (proton acceptor) is an active-site residue. Residue glutamate 175 coordinates Zn(2+). Serine 194 carries the post-translational modification Phosphoserine. Zn(2+) contacts are provided by aspartate 203 and histidine 453.

It belongs to the peptidase M20A family. In terms of assembly, homodimer. Requires Zn(2+) as cofactor. Detected exclusively in kidney.

The protein localises to the secreted. The enzyme catalyses Preferential hydrolysis of the beta-Ala-|-His dipeptide (carnosine), and also anserine, Xaa-|-His dipeptides and other dipeptides including homocarnosine.. The catalysed reaction is carnosine + H2O = beta-alanine + L-histidine. It carries out the reaction anserine + H2O = N(pros)-methyl-L-histidine + beta-alanine. It catalyses the reaction L-alanyl-L-histidine + H2O = L-histidine + L-alanine. The enzyme catalyses glycyl-L-histidine + H2O = L-histidine + glycine. The catalysed reaction is L-homocarnosine + H2O = 4-aminobutanoate + L-histidine. In terms of biological role, catalyzes the peptide bond hydrolysis in Xaa-His dipeptides, displaying the highest activity toward carnosine (beta-alanyl-L-histidine) and anserine (beta-alanyl-3-methyl-histidine). This chain is Beta-Ala-His dipeptidase (Cndp1), found in Rattus norvegicus (Rat).